The sequence spans 309 residues: Flavonol sulfotransferase-like (309 aa).

59–64 (KTGTTW) is a 3'-phosphoadenylyl sulfate binding site. The active-site Proton acceptor is the His-119. Residues Arg-141, Ser-149, Tyr-207, and 274–276 (RKG) each bind 3'-phosphoadenylyl sulfate.

This sequence belongs to the sulfotransferase 1 family.

It localises to the cytoplasm. The chain is Flavonol sulfotransferase-like from Flaveria bidentis (Coastal plain yellowtops).